The following is a 212-amino-acid chain: Stem bromelain (212 aa).

Cystine bridges form between C23–C63 and C57–C96. The active site involves C26. An N-linked (GlcNAc...) asparagine glycan is attached at N117. A disulfide bridge connects residues C152 and C199. H158 is an active-site residue.

This sequence belongs to the peptidase C1 family.

The catalysed reaction is Broad specificity for cleavage of proteins, but strong preference for Z-Arg-Arg-|-NHMec among small molecule substrates.. Its function is as follows. Cysteine proteinase with a high level of diversity in substrate specificity. The protein is Stem bromelain of Ananas comosus (Pineapple).